A 314-amino-acid chain; its full sequence is Protoheme IX farnesyltransferase 2 (314 aa).

9 helical membrane passes run 32–49 (VMSL…AAPV), 54–76 (LLAV…LNMW), 98–118 (IQPH…VMTL), 120–140 (VLVN…YAVV), 153–173 (IVIG…AVTG), 180–200 (IVLF…LALF), 226–246 (IFAY…LGYT), 249–269 (FYGV…WKVL), and 285–305 (FAYS…DSVV).

Belongs to the UbiA prenyltransferase family. Protoheme IX farnesyltransferase subfamily.

Its subcellular location is the cell inner membrane. The enzyme catalyses heme b + (2E,6E)-farnesyl diphosphate + H2O = Fe(II)-heme o + diphosphate. Its pathway is porphyrin-containing compound metabolism; heme O biosynthesis; heme O from protoheme: step 1/1. In terms of biological role, converts heme B (protoheme IX) to heme O by substitution of the vinyl group on carbon 2 of heme B porphyrin ring with a hydroxyethyl farnesyl side group. The polypeptide is Protoheme IX farnesyltransferase 2 (Mesorhizobium japonicum (strain LMG 29417 / CECT 9101 / MAFF 303099) (Mesorhizobium loti (strain MAFF 303099))).